We begin with the raw amino-acid sequence, 304 residues long: Protoheme IX farnesyltransferase 2 (304 aa).

Helical transmembrane passes span 28–48, 50–70, 98–118, 122–142, 150–170, 176–196, 223–243, 245–265, and 282–302; these read VVAL…VVDF, WLQA…AAAF, ISVA…LYAL, LTAW…TMYL, IVIA…AVTG, AWLL…AIAI, ILLY…VGMV, SVYL…AWKL, and IYHL…GLFF.

The protein belongs to the UbiA prenyltransferase family. Protoheme IX farnesyltransferase subfamily.

The protein localises to the cell inner membrane. The enzyme catalyses heme b + (2E,6E)-farnesyl diphosphate + H2O = Fe(II)-heme o + diphosphate. Its pathway is porphyrin-containing compound metabolism; heme O biosynthesis; heme O from protoheme: step 1/1. Its function is as follows. Converts heme B (protoheme IX) to heme O by substitution of the vinyl group on carbon 2 of heme B porphyrin ring with a hydroxyethyl farnesyl side group. This chain is Protoheme IX farnesyltransferase 2, found in Vibrio campbellii (strain ATCC BAA-1116).